The following is a 599-amino-acid chain: Tryptophan 2-C-methyltransferase (599 aa).

In terms of domain architecture, B12-binding spans 4–149 (KGTVALINPN…RALAEGRSAD (146 aa)). The tract at residues 167–197 (RVAPPALDPRAAPAPSSSPSPSPAPSSSSAP) is disordered. Over residues 168-181 (VAPPALDPRAAPAP) the composition is skewed to low complexity. The region spanning 239–492 (YREGGLGSIL…IEYERQFMFD (254 aa)) is the Radical SAM core domain. Positions 253, 257, and 260 each coordinate [4Fe-4S] cluster.

Requires [4Fe-4S] cluster as cofactor. Cob(II)alamin serves as cofactor.

The catalysed reaction is L-tryptophan + S-adenosyl-L-methionine = 2-methyl-L-tryptophan + S-adenosyl-L-homocysteine + H(+). Involved in the biosynthetic pathway of the antibiotic thiostrepton A. First, TsrM catalyzes the transfer of a methyl group from S-adenosyl methionine (SAM) to cobalamin, leading to the formation of methylcobalamin (CH3-cobalamin) and S-adenosyl-L-homocysteine (SAH). Then the methyl group is transferred to the C2 position of tryptophan (Trp) with the concerted action of the radical SAM [4Fe-4S] center, leading to the production of methyltryptophan. The protein is Tryptophan 2-C-methyltransferase of Streptomyces laurentii.